The chain runs to 1379 residues: DNA-directed RNA polymerase subunit beta (1379 aa).

This sequence belongs to the RNA polymerase beta chain family. The RNAP catalytic core consists of 2 alpha, 1 beta, 1 beta' and 1 omega subunit. When a sigma factor is associated with the core the holoenzyme is formed, which can initiate transcription.

It carries out the reaction RNA(n) + a ribonucleoside 5'-triphosphate = RNA(n+1) + diphosphate. In terms of biological role, DNA-dependent RNA polymerase catalyzes the transcription of DNA into RNA using the four ribonucleoside triphosphates as substrates. The sequence is that of DNA-directed RNA polymerase subunit beta from Campylobacter fetus subsp. fetus (strain 82-40).